Consider the following 47-residue polypeptide: Large ribosomal subunit protein bL34 (47 aa).

Belongs to the bacterial ribosomal protein bL34 family.

The chain is Large ribosomal subunit protein bL34 from Mycobacteroides abscessus (strain ATCC 19977 / DSM 44196 / CCUG 20993 / CIP 104536 / JCM 13569 / NCTC 13031 / TMC 1543 / L948) (Mycobacterium abscessus).